Consider the following 414-residue polypeptide: Multifunctional CCA protein (414 aa).

Residues Gly8 and Arg11 each coordinate ATP. CTP contacts are provided by Gly8 and Arg11. Residues Glu21 and Asp23 each coordinate Mg(2+). Arg91, Arg137, and Arg140 together coordinate ATP. Residues Arg91, Arg137, and Arg140 each contribute to the CTP site. Positions 228-329 (TGIHTLMTLA…LKLFDAIDVW (102 aa)) constitute an HD domain.

This sequence belongs to the tRNA nucleotidyltransferase/poly(A) polymerase family. Bacterial CCA-adding enzyme type 1 subfamily. As to quaternary structure, monomer. Can also form homodimers and oligomers. Requires Mg(2+) as cofactor. The cofactor is Ni(2+).

It carries out the reaction a tRNA precursor + 2 CTP + ATP = a tRNA with a 3' CCA end + 3 diphosphate. The catalysed reaction is a tRNA with a 3' CCA end + 2 CTP + ATP = a tRNA with a 3' CCACCA end + 3 diphosphate. Catalyzes the addition and repair of the essential 3'-terminal CCA sequence in tRNAs without using a nucleic acid template. Adds these three nucleotides in the order of C, C, and A to the tRNA nucleotide-73, using CTP and ATP as substrates and producing inorganic pyrophosphate. tRNA 3'-terminal CCA addition is required both for tRNA processing and repair. Also involved in tRNA surveillance by mediating tandem CCA addition to generate a CCACCA at the 3' terminus of unstable tRNAs. While stable tRNAs receive only 3'-terminal CCA, unstable tRNAs are marked with CCACCA and rapidly degraded. This chain is Multifunctional CCA protein, found in Yersinia enterocolitica serotype O:8 / biotype 1B (strain NCTC 13174 / 8081).